The following is a 130-amino-acid chain: Small ribosomal subunit protein uS9 (130 aa).

Residues 98-130 (LKRAGMLTRDPRMKERKKPGLKGARRSPQFSKR) form a disordered region. Over residues 111–130 (KERKKPGLKGARRSPQFSKR) the composition is skewed to basic residues.

Belongs to the universal ribosomal protein uS9 family.

The sequence is that of Small ribosomal subunit protein uS9 from Macrococcus caseolyticus (strain JCSC5402) (Macrococcoides caseolyticum).